The primary structure comprises 57 residues: MENSKVMKDIEVANLLEEVQEDELNEVLGAKKKSGVIPTVSHDCHMNSFQFVFTCCS.

Positions 1 to 30 are excised as a propeptide; the sequence is MENSKVMKDIEVANLLEEVQEDELNEVLGA. The beta-methyllanthionine (Thr-Cys) cross-link spans 39 to 44; the sequence is TVSHDC. Cross-links (lanthionine (Ser-Cys)) lie at residues 41 to 55 and 48 to 56; these read SHDCHMNSFQFVFTC and SFQFVFTCC. A 2,3-didehydrobutyrine modification is found at T54.

Post-translationally, maturation of lantibiotics involves the enzymatic conversion of Thr, and Ser into dehydrated AA and the formation of thioether bonds with cysteine. This is followed by membrane translocation and cleavage of the modified precursor.

Its subcellular location is the secreted. In terms of biological role, lanthionine-containing peptide antibiotic (lantibiotic) active on Gram-positive bacteria. The bactericidal activity of lantibiotics is based on depolarization of energized bacterial cytoplasmic membranes, initiated by the formation of aqueous transmembrane pores. This is Lantibiotic nukacin from Staphylococcus simulans.